The sequence spans 1052 residues: uncharacterized protein (1052 aa).

The region spanning W389–N561 is the Helicase ATP-binding domain. S400–T407 contributes to the ATP binding site.

The protein belongs to the mimivirus R1 family.

This is an uncharacterized protein from Acanthamoeba polyphaga mimivirus (APMV).